Reading from the N-terminus, the 326-residue chain is Target of rapamycin complex subunit lst8 (326 aa).

WD repeat units follow at residues 1 to 37 (MNSN…CTRT), 40 to 80 (HQDS…PVIN), 83 to 122 (GVSK…LQCQ), 126 to 165 (QVNA…NEQL), 168 to 207 (ETDV…GEDL), 218 to 257 (AHKR…LMTE), and 268 to 309 (TSRG…REYS).

Belongs to the WD repeat LST8 family. As to quaternary structure, part of the mechanistic target of rapamycin complex 1 (mTORC1) which contains MTOR, MLST8 and RPTOR. Component of the mechanistic target of rapamycin complex 2 (mTORC2), consisting in two heterotretramers composed of MTOR, MLST8, RICTOR and MAPKAP1/SIN1.

It is found in the lysosome membrane. The protein localises to the cytoplasm. Functionally, subunit of both mTORC1 and mTORC2, which regulates cell growth and survival in response to nutrient and hormonal signals. mTORC1 is activated in response to growth factors or amino acids. In response to nutrients, mTORC1 is recruited to the lysosome membrane and promotes protein, lipid and nucleotide synthesis by phosphorylating several substrates, such as ribosomal protein S6 kinase (RPS6KB1 and RPS6KB2) and EIF4EBP1 (4E-BP1). In the same time, it inhibits catabolic pathways by phosphorylating the autophagy initiation components ULK1 and ATG13, as well as transcription factor TFEB, a master regulators of lysosomal biogenesis and autophagy. The mTORC1 complex is inhibited in response to starvation and amino acid depletion. Within mTORC1, MLST8 interacts directly with MTOR and enhances its kinase activity. In nutrient-poor conditions, stabilizes the MTOR-RPTOR interaction and favors RPTOR-mediated inhibition of MTOR activity. As part of the mTORC2 complex, transduces signals from growth factors to pathways involved in proliferation, cytoskeletal organization, lipogenesis and anabolic output. mTORC2 is also activated by growth factors, but seems to be nutrient-insensitive. In response to growth factors, mTORC2 phosphorylates and activates AGC protein kinase family members, including AKT (AKT1, AKT2 and AKT3), PKC (PRKCA, PRKCB and PRKCE) and SGK1. mTORC2 functions upstream of Rho GTPases to regulate the actin cytoskeleton, probably by activating one or more Rho-type guanine nucleotide exchange factors. mTORC2 promotes the serum-induced formation of stress-fibers or F-actin. Within mTORC2, MLST8 acts as a bridge between MAPKAP1/SIN1 and MTOR. The sequence is that of Target of rapamycin complex subunit lst8 (mlst8) from Xenopus tropicalis (Western clawed frog).